A 468-amino-acid polypeptide reads, in one-letter code: Glutamate--tRNA ligase (468 aa).

A 'HIGH' region motif is present at residues 9–19 (PSPTGYLHVGG). 4 residues coordinate Zn(2+): Cys-98, Cys-100, Cys-125, and Asp-127. The 'KMSKS' region motif lies at 235–239 (KLSKR). Position 238 (Lys-238) interacts with ATP.

The protein belongs to the class-I aminoacyl-tRNA synthetase family. Glutamate--tRNA ligase type 1 subfamily. As to quaternary structure, monomer. The cofactor is Zn(2+).

Its subcellular location is the cytoplasm. The enzyme catalyses tRNA(Glu) + L-glutamate + ATP = L-glutamyl-tRNA(Glu) + AMP + diphosphate. Its function is as follows. Catalyzes the attachment of glutamate to tRNA(Glu) in a two-step reaction: glutamate is first activated by ATP to form Glu-AMP and then transferred to the acceptor end of tRNA(Glu). The polypeptide is Glutamate--tRNA ligase (Idiomarina loihiensis (strain ATCC BAA-735 / DSM 15497 / L2-TR)).